Here is a 375-residue protein sequence, read N- to C-terminus: Alcohol dehydrogenase 1 (375 aa).

N-acetylserine is present on S1. Residues C46, H67, C97, C100, C103, C111, and C175 each contribute to the Zn(2+) site. Residues 200–205 (GLGGVG), D224, K229, 293–295 (VGV), and R370 each bind NAD(+).

The protein belongs to the zinc-containing alcohol dehydrogenase family. Class-I subfamily. As to quaternary structure, homodimer. Zn(2+) serves as cofactor.

Its subcellular location is the cytoplasm. It carries out the reaction a primary alcohol + NAD(+) = an aldehyde + NADH + H(+). The catalysed reaction is a secondary alcohol + NAD(+) = a ketone + NADH + H(+). This is Alcohol dehydrogenase 1 (ADH1) from Coturnix japonica (Japanese quail).